The sequence spans 317 residues: MATH domain and coiled-coil domain-containing protein At3g58240 (317 aa).

The MATH domain occupies Asp6–Ile131. Positions Lys254–Asn305 form a coiled coil.

The chain is MATH domain and coiled-coil domain-containing protein At3g58240 from Arabidopsis thaliana (Mouse-ear cress).